Consider the following 215-residue polypeptide: MNINTILFDLDGTLINTNDLIIESFLHTLNHYYPNQYTREDVLAFIGPPLRDTFEAIDPERVDEMIETYRAFNHAHHDALVKEYETVYDTVQTLHEKGFKLGIVTTKIRHTVNMGLKLTKLDSFFKCVITLDDVEHAKPHPEPIEKALACLQAKPEETLMVGDNHHDILAGKHAGTKTAGVAWTIKGREHLATYEPDFMLEKMSDLLSILGVTSR.

D9 serves as the catalytic Nucleophile.

This sequence belongs to the HAD-like hydrolase superfamily. PpaX family. Mg(2+) is required as a cofactor.

It carries out the reaction diphosphate + H2O = 2 phosphate + H(+). Its function is as follows. Hydrolyzes pyrophosphate formed during P-Ser-HPr dephosphorylation by HPrK/P. Might play a role in controlling the intracellular pyrophosphate pool. This chain is Pyrophosphatase PpaX, found in Anoxybacillus flavithermus (strain DSM 21510 / WK1).